The following is a 218-amino-acid chain: Serine/threonine-protein phosphatase 1 (218 aa).

Residues aspartate 24, histidine 26, aspartate 53, and asparagine 79 each coordinate Mn(2+). Residue histidine 80 is the Proton donor of the active site. Residue histidine 187 participates in Mn(2+) binding.

The protein belongs to the PPP phosphatase family. PP-1 subfamily. The cofactor is Mn(2+).

It carries out the reaction O-phospho-L-seryl-[protein] + H2O = L-seryl-[protein] + phosphate. It catalyses the reaction O-phospho-L-threonyl-[protein] + H2O = L-threonyl-[protein] + phosphate. Its function is as follows. Plays a key role in signaling protein misfolding via the CpxR/CPXA transducing system. It also modulates the phosphorylated status of many phosphoproteins in E.coli, some of which acting as major chaperones. Has been shown, in vitro, to act on Ser, Thr and Tyr-phosphorylated substrates. This Escherichia coli (strain K12) protein is Serine/threonine-protein phosphatase 1 (pphA).